A 92-amino-acid polypeptide reads, in one-letter code: C-C motif chemokine 4-like (92 aa).

The first 23 residues, 1–23, serve as a signal peptide directing secretion; it reads MKLCVTVLSLLVLVAAFCSLALS. 2 disulfides stabilise this stretch: Cys34–Cys58 and Cys35–Cys74.

This sequence belongs to the intercrine beta (chemokine CC) family. In terms of assembly, interacts with CCR5. As to expression, detected in B-cells.

It is found in the secreted. In terms of biological role, chemokine that induces chemotaxis of cells expressing CCR5 or CCR1. Inhibits HIV replication in peripheral blood monocytes that express CCR5. This Homo sapiens (Human) protein is C-C motif chemokine 4-like (CCL4L1).